Consider the following 177-residue polypeptide: Large ribosomal subunit protein uL6 (177 aa).

Belongs to the universal ribosomal protein uL6 family. In terms of assembly, part of the 50S ribosomal subunit.

This protein binds to the 23S rRNA, and is important in its secondary structure. It is located near the subunit interface in the base of the L7/L12 stalk, and near the tRNA binding site of the peptidyltransferase center. This is Large ribosomal subunit protein uL6 from Rickettsia bellii (strain OSU 85-389).